The chain runs to 1185 residues: Mucin-6 (1185 aa).

2 cysteine pairs are disulfide-bonded: Cys-1-Cys-132 and Cys-23-Cys-168. Positions 1–169 constitute a VWFD 1 domain; that stretch reads CSTWGGGHFS…KMDDPSEICL (169 aa). Asn-223 carries an N-linked (GlcNAc...) (complex) asparagine glycan. The TIL 1 domain occupies 257-312; sequence CSANQIYEECGSPCIKTCSNPEYSCSSHCTYGCFCPEGTVLDDISKNRTCVHLEQC. In terms of domain architecture, VWFD 2 spans 350–534; it reads GRCSLEGGSF…AMERETDPCA (185 aa). Intrachain disulfides connect Cys-352/Cys-488 and Cys-374/Cys-533. TIL domains are found at residues 619-676 and 737-782; these read CTGN…KSHC and GATC…PEEC. Positions 821–993 constitute a VWFD 3 domain; it reads STCNLYGEGH…NSWKENPLCG (173 aa). 4 disulfide bridges follow: Cys-823-Cys-957, Cys-845-Cys-992, Cys-854-Cys-954, and Cys-872-Cys-879. The N-linked (GlcNAc...) (complex) asparagine glycan is linked to Asn-930. The span at 1160–1178 shows a compositional bias: low complexity; sequence PTATQPTSPSTSSASTVLT. Residues 1160 to 1185 are disordered; it reads PTATQPTSPSTSSASTVLTETTNPPV.

Multimer; disulfide-linked. Post-translationally, N-glycosylated with N-acetylglucosamine (6.7%), N-acetylgalactosamine (0.6%), galactose (1.8%), mannose (4.6%), N-acetylneuraminic acid (1.0%) and sulfate-containing glycans (0.7%).

Its subcellular location is the secreted. In terms of biological role, ovomucin, the glycoprotein responsible for the gel properties of egg white, is composed for 2 subunits, alpha-ovomucin/MUC5B and beta-ovomucin/MUC6. This is Mucin-6 (MUC6) from Gallus gallus (Chicken).